Consider the following 195-residue polypeptide: Small ribosomal subunit protein uS4 (195 aa).

Residues 88–150 (RRLENVVYRL…SKNVELIKLA (63 aa)) form the S4 RNA-binding domain.

It belongs to the universal ribosomal protein uS4 family. As to quaternary structure, part of the 30S ribosomal subunit. Contacts protein S5. The interaction surface between S4 and S5 is involved in control of translational fidelity.

Functionally, one of the primary rRNA binding proteins, it binds directly to 16S rRNA where it nucleates assembly of the body of the 30S subunit. In terms of biological role, with S5 and S12 plays an important role in translational accuracy. This is Small ribosomal subunit protein uS4 from Fusobacterium nucleatum subsp. nucleatum (strain ATCC 25586 / DSM 15643 / BCRC 10681 / CIP 101130 / JCM 8532 / KCTC 2640 / LMG 13131 / VPI 4355).